The chain runs to 134 residues: Small ribosomal subunit protein uS8 (134 aa).

Belongs to the universal ribosomal protein uS8 family. In terms of assembly, part of the 30S ribosomal subunit. Contacts proteins S5 and S12.

In terms of biological role, one of the primary rRNA binding proteins, it binds directly to 16S rRNA central domain where it helps coordinate assembly of the platform of the 30S subunit. This is Small ribosomal subunit protein uS8 from Fervidobacterium nodosum (strain ATCC 35602 / DSM 5306 / Rt17-B1).